Reading from the N-terminus, the 248-residue chain is E3 SUMO-protein ligase NSE2 (248 aa).

Methionine 1 is subject to N-acetylmethionine. Glycyl lysine isopeptide (Lys-Gly) (interchain with G-Cter in SUMO2) cross-links involve residues lysine 92 and lysine 109. Serine 118 bears the Phosphoserine mark. Glycyl lysine isopeptide (Lys-Gly) (interchain with G-Cter in SUMO2) cross-links involve residues lysine 127 and lysine 132. The SP-RING-type zinc finger occupies 156 to 242 (VDEDMIVTQS…LRRAIESHKK (87 aa)). Zn(2+) contacts are provided by cysteine 187, histidine 189, cysteine 212, and cysteine 217.

Belongs to the NSE2 family. As to quaternary structure, component of the SMC5-SMC6 complex which consists at least of SMC5, SMC6, NSMCE2, NSMCE1, NSMCE4A or EID3 and NSMCE3. In terms of processing, sumoylated, possibly via autosumoylation.

The protein resides in the nucleus. The protein localises to the chromosome. It localises to the telomere. Its subcellular location is the PML body. Its pathway is protein modification; protein sumoylation. Its function is as follows. E3 SUMO-protein ligase component of the SMC5-SMC6 complex, a complex involved in DNA double-strand break repair by homologous recombination. Is not be required for the stability of the complex. The complex may promote sister chromatid homologous recombination by recruiting the SMC1-SMC3 cohesin complex to double-strand breaks. Acts as an E3 ligase mediating SUMO attachment to various proteins such as SMC6L1 and TSNAX, the shelterin complex subunits TERF1, TERF2, TINF2 and TERF2IP, RAD51AP1, and maybe the cohesin components RAD21 and STAG2. Required for recruitment of telomeres to PML nuclear bodies. Required for sister chromatid cohesion during prometaphase and mitotic progression. The protein is E3 SUMO-protein ligase NSE2 (NSMCE2) of Bos taurus (Bovine).